Consider the following 211-residue polypeptide: Large ribosomal subunit protein uL4 (211 aa).

Residues 42-87 (AHMRQGTASTLTRSEVRGGGRKPYKQKGTGRARQGSVRTPLRPGGG) are disordered. The span at 60-71 (GGRKPYKQKGTG) shows a compositional bias: basic residues.

It belongs to the universal ribosomal protein uL4 family. In terms of assembly, part of the 50S ribosomal subunit.

One of the primary rRNA binding proteins, this protein initially binds near the 5'-end of the 23S rRNA. It is important during the early stages of 50S assembly. It makes multiple contacts with different domains of the 23S rRNA in the assembled 50S subunit and ribosome. Its function is as follows. Forms part of the polypeptide exit tunnel. The chain is Large ribosomal subunit protein uL4 from Synechococcus sp. (strain CC9902).